The primary structure comprises 124 residues: Putative iron-sulfur cluster insertion protein ErpA (124 aa).

C52, C116, and C118 together coordinate iron-sulfur cluster.

The protein belongs to the HesB/IscA family. Homodimer. Requires iron-sulfur cluster as cofactor.

Required for insertion of 4Fe-4S clusters. This is Putative iron-sulfur cluster insertion protein ErpA from Delftia acidovorans (strain DSM 14801 / SPH-1).